The following is a 404-amino-acid chain: Probable tRNA sulfurtransferase (404 aa).

A THUMP domain is found at 61–166 (QTLVTGLPKI…HDATYMMAQV (106 aa)). ATP-binding positions include 184-185 (ML), 209-210 (HF), R266, G288, and Q297.

It belongs to the ThiI family.

It localises to the cytoplasm. The catalysed reaction is [ThiI sulfur-carrier protein]-S-sulfanyl-L-cysteine + a uridine in tRNA + 2 reduced [2Fe-2S]-[ferredoxin] + ATP + H(+) = [ThiI sulfur-carrier protein]-L-cysteine + a 4-thiouridine in tRNA + 2 oxidized [2Fe-2S]-[ferredoxin] + AMP + diphosphate. It carries out the reaction [ThiS sulfur-carrier protein]-C-terminal Gly-Gly-AMP + S-sulfanyl-L-cysteinyl-[cysteine desulfurase] + AH2 = [ThiS sulfur-carrier protein]-C-terminal-Gly-aminoethanethioate + L-cysteinyl-[cysteine desulfurase] + A + AMP + 2 H(+). It functions in the pathway cofactor biosynthesis; thiamine diphosphate biosynthesis. In terms of biological role, catalyzes the ATP-dependent transfer of a sulfur to tRNA to produce 4-thiouridine in position 8 of tRNAs, which functions as a near-UV photosensor. Also catalyzes the transfer of sulfur to the sulfur carrier protein ThiS, forming ThiS-thiocarboxylate. This is a step in the synthesis of thiazole, in the thiamine biosynthesis pathway. The sulfur is donated as persulfide by IscS. In Lysinibacillus sphaericus (strain C3-41), this protein is Probable tRNA sulfurtransferase.